Consider the following 267-residue polypeptide: 3-methyl-2-oxobutanoate hydroxymethyltransferase (267 aa).

Mg(2+) is bound by residues Asp45 and Asp84. Residues 45–46, Asp84, and Lys113 each bind 3-methyl-2-oxobutanoate; that span reads DS. Glu115 is a binding site for Mg(2+). The active-site Proton acceptor is Glu182.

The protein belongs to the PanB family. As to quaternary structure, homodecamer; pentamer of dimers. The cofactor is Mg(2+).

Its subcellular location is the cytoplasm. The catalysed reaction is 3-methyl-2-oxobutanoate + (6R)-5,10-methylene-5,6,7,8-tetrahydrofolate + H2O = 2-dehydropantoate + (6S)-5,6,7,8-tetrahydrofolate. It participates in cofactor biosynthesis; coenzyme A biosynthesis. In terms of biological role, catalyzes the reversible reaction in which hydroxymethyl group from 5,10-methylenetetrahydrofolate is transferred onto alpha-ketoisovalerate to form ketopantoate. This chain is 3-methyl-2-oxobutanoate hydroxymethyltransferase, found in Saccharolobus islandicus (strain Y.N.15.51 / Yellowstone #2) (Sulfolobus islandicus).